Here is a 398-residue protein sequence, read N- to C-terminus: G2/mitotic-specific cyclin-B2 (398 aa).

T8 is subject to Phosphothreonine. 3 positions are modified to phosphoserine: S11, S77, and S92. The residue at position 94 (T94) is a Phosphothreonine. 3 positions are modified to phosphoserine: S99, S392, and S398.

The protein belongs to the cyclin family. Cyclin AB subfamily. As to quaternary structure, interacts with the CDK1 protein kinase to form a serine/threonine kinase holoenzyme complex also known as maturation promoting factor (MPF). The cyclin subunit imparts substrate specificity to the complex.

Functionally, essential for the control of the cell cycle at the G2/M (mitosis) transition. This is G2/mitotic-specific cyclin-B2 (CCNB2) from Homo sapiens (Human).